We begin with the raw amino-acid sequence, 58 residues long: Enterocin-HF (58 aa).

The propeptide occupies 1-15; that stretch reads MEKLTVKEMSQVVGG. Cysteine 24 and cysteine 29 form a disulfide bridge.

The protein localises to the secreted. Its function is as follows. Bacteriocin. This is Enterocin-HF (entHF) from Enterococcus faecium (Streptococcus faecium).